We begin with the raw amino-acid sequence, 253 residues long: uncharacterized protein (253 aa).

The tract at residues 211–235 (DEPEPAQPTLTVPSAQPVSNRRGKP) is disordered. The segment covering 218–229 (PTLTVPSAQPVS) has biased composition (polar residues).

This is an uncharacterized protein from Mycobacterium tuberculosis (strain CDC 1551 / Oshkosh).